The following is a 74-amino-acid chain: Mitochondrial import receptor subunit TOM6 homolog (74 aa).

Over residues 1-20 (MASSGVTVSAAGSASEASEV) the composition is skewed to low complexity. A disordered region spans residues 1-21 (MASSGVTVSAAGSASEASEVP). The residue at position 2 (Ala2) is an N-acetylalanine.

This sequence belongs to the Tom6 family. In terms of assembly, forms part of the preprotein translocase complex of the outer mitochondrial membrane (TOM complex) which consists of at least 7 different proteins (TOMM5, TOMM6, TOMM7, TOMM20, TOMM22, TOMM40 and TOMM70).

The protein resides in the mitochondrion outer membrane. This Mus musculus (Mouse) protein is Mitochondrial import receptor subunit TOM6 homolog (Tomm6).